The following is a 2215-amino-acid chain: Sortilin-related receptor (2215 aa).

A signal peptide spans methionine 1–glycine 28. The propeptide at glycine 29–arginine 81 is removed in mature form. The disordered stretch occupies residues arginine 59–alanine 84. The Lumenal portion of the chain corresponds to serine 82–alanine 2138. N-linked (GlcNAc...) asparagine glycosylation is present at asparagine 99. The residue at position 114 (serine 114) is a Phosphoserine. Residues tyrosine 136 to lysine 147 form a BNR 1 repeat. N-linked (GlcNAc...) asparagine glycosylation occurs at asparagine 158. The stretch at tryptophan 232 to methionine 243 is one BNR 2 repeat. Asparagine 367, asparagine 368, and asparagine 430 each carry an N-linked (GlcNAc...) asparagine glycan. 3 BNR repeats span residues valine 441–phenylalanine 452, tyrosine 521–glutamate 532, and lysine 562–threonine 573. N-linked (GlcNAc...) asparagine glycosylation is found at asparagine 616, asparagine 674, asparagine 818, and asparagine 871. LDL-receptor class B repeat units follow at residues asparagine 800–serine 843, glutamine 844–glutamate 887, glycine 888–tryptophan 932, isoleucine 933–glutamate 972, and isoleucine 973–glycine 1013. Residues cysteine 1026–valine 1072 enclose the EGF-like domain. N-linked (GlcNAc...) asparagine glycosylation is found at asparagine 1035 and asparagine 1068. 9 LDL-receptor class A domains span residues asparagine 1076–threonine 1114, threonine 1115–methionine 1155, histidine 1156–alanine 1194, threonine 1198–glutamate 1236, lysine 1238–glutamate 1272, proline 1273–glutamine 1317, lysine 1323–asparagine 1361, proline 1366–aspartate 1405, and serine 1417–serine 1455. 21 disulfide bridges follow: cysteine 1078/cysteine 1090, cysteine 1085/cysteine 1103, cysteine 1097/cysteine 1112, cysteine 1117/cysteine 1131, cysteine 1125/cysteine 1144, cysteine 1138/cysteine 1153, cysteine 1158/cysteine 1170, cysteine 1165/cysteine 1183, cysteine 1177/cysteine 1192, cysteine 1199/cysteine 1211, cysteine 1206/cysteine 1224, cysteine 1218/cysteine 1235, cysteine 1239/cysteine 1249, cysteine 1244/cysteine 1262, cysteine 1256/cysteine 1271, cysteine 1275/cysteine 1289, cysteine 1283/cysteine 1302, cysteine 1296/cysteine 1315, cysteine 1325/cysteine 1337, cysteine 1332/cysteine 1350, and cysteine 1344/cysteine 1359. A glycan (N-linked (GlcNAc...) asparagine) is linked at asparagine 1164. N-linked (GlcNAc...) asparagine glycosylation is present at asparagine 1191. A glycan (N-linked (GlcNAc...) asparagine) is linked at asparagine 1246. Asparagine 1367 carries an N-linked (GlcNAc...) asparagine glycan. 6 cysteine pairs are disulfide-bonded: cysteine 1368/cysteine 1381, cysteine 1376/cysteine 1394, cysteine 1388/cysteine 1403, cysteine 1419/cysteine 1431, cysteine 1426/cysteine 1444, and cysteine 1438/cysteine 1453. A glycan (N-linked (GlcNAc...) asparagine) is linked at asparagine 1458. LDL-receptor class A domains follow at residues glycine 1469–threonine 1508 and leucine 1512–aspartate 1551. Disulfide bonds link cysteine 1471/cysteine 1484, cysteine 1478/cysteine 1497, cysteine 1491/cysteine 1506, cysteine 1514/cysteine 1527, cysteine 1521/cysteine 1540, and cysteine 1534/cysteine 1549. 6 Fibronectin type-III domains span residues lysine 1557–glycine 1649, alanine 1653–glycine 1745, valine 1747–alanine 1846, proline 1844–methionine 1928, proline 1935–alanine 2030, and leucine 2031–glutamate 2119. Asparagine 1608, asparagine 1706, asparagine 1733, asparagine 1810, asparagine 1855, asparagine 1895, asparagine 1987, asparagine 2011, asparagine 2055, asparagine 2070, asparagine 2077, and asparagine 2093 each carry an N-linked (GlcNAc...) asparagine glycan. The helical transmembrane segment at alanine 2139 to leucine 2159 threads the bilayer. Topologically, residues tyrosine 2160–alanine 2215 are cytoplasmic. Residues lysine 2162–arginine 2165 carry the Potential nuclear localization signal for the C-terminal fragment generated by PSEN1 motif. Residues phenylalanine 2173–tyrosine 2178 carry the Endocytosis signal motif. The segment at aspartate 2191 to alanine 2215 is required for efficient Golgi apparatus - endosome sorting. Positions methionine 2202–alanine 2215 are required for interaction with GGA1 and GGA2. Residue serine 2207 is modified to Phosphoserine; by ROCK2. The short motif at aspartate 2209–valine 2213 is the DXXLL motif involved in the interaction with GGA1 element.

It belongs to the VPS10-related sortilin family. SORL1 subfamily. In terms of assembly, after maturation cleavage, interacts (via N-terminus) with its own propeptide; this interaction prevents interaction with other ligands, including CRLF1, GDNF, GFRA1, IL6 and IL6R. Interacts (via N-terminal ectodomain) with APP, forming a 1:1 stoichiometric complex, including with isoforms APP695, APP751 and APP770; this interaction retains APP in the trans-Golgi network and reduces processing into soluble APP-alpha and amyloid-beta peptides. Also interacts with APP C-terminal fragment C99 and with Abeta40. Interacts with beta-secretase BACE1/BACE; this interaction may affect BACE1-binding to APP and hence reduce BACE1-dependent APP cleavage. Interacts with LRPAP1/RAP. Interacts (via C-terminal cytosolic domain) with GGA1 and GGA2 (via N-terminal VHS domain). Interacts with PACS1. May interact (via the N-terminal ectodomain) with the morphogenetic neuropeptide, also called head activator or HA; this interaction is impaired in the presence of propeptide. Interacts with neurotensin/NTS. Interacts (via the N-terminal ectodomain) with PDGFB homodimer. Interacts (via N-terminal ectodomain) with the uPA receptor PLAUR. Interacts with uPA/PLAU and PAI1/SERPINE1, either individually or in complex with each other, leading to endocytosis. Also interacts with PAI1/SERPINE1 in complex with tPA/PLAT. Interacts (via C-terminus) with AP-1 and AP-2 complexes. Interacts with BMPR1A and BMPR1B. Interacts with lipoprotein lipase LPL; this interaction is optimal in slightly acidic conditions. Interacts (via N-terminal ectodomain) with GDNF (via propeptide) and GDNF receptor alpha-1/GFRA1, either individually or in complex with each other. The interaction with GDNF occurs mostly intracellularly. Also interacts with other GDNF receptor alpha family members, including GFRA2, GFRA3 and GFRA4. Interacts with the insulin receptor INSR; this interaction strongly increases the surface exposure of INSR. Interacts (via cytosolic C-terminus) with STK39/SPAK. Interacts (via N-terminal ectodomain) with the heterodimeric complex CRLF1-CLC; within this complex, the interaction is mediated predominantly by the CRLF1 moiety. Interacts with CNTFR, as well as with the tripartite signaling complex formed by CRLF1, CLC and CNTFR. Interacts (via N-terminal ectodomain) with IL6; this interaction leads to IL6 internalization and lysosomal degradation. Binding of SOLRL1 secreted N-terminal ectodomain to IL6 may increase IL6 trans signaling. Interacts with secreted IL6R; this interaction leads to IL6R internalization. Also interacts with transmembrane IL6R; this interaction does not affect subcellular location. Interacts with APOE. Interacts with apolipoprotein E-rich beta-VLDL. Interacts with APOA5; this interaction leads to APOA5 internalization and is abolished by heparin. Interaction with APOA5 results in enhanced binding to chylomicrons. Interacts with ROCK2. Interacts (via cytosolic C-terminus) with PPP3CB/calcineurin A beta. Interacts with NTRK2/TRKB; this interaction facilitates NTRK2 trafficking between synaptic plasma membranes, postsynaptic densities and cell soma, hence positively regulates BDNF signaling. Interacts (via cytosolic C-terminus) with HSPA12A in an ADP-dependent manner; this interaction affects SORL1 internalization and subcellular localization. Interacts (via N-terminal ectodomain) with ERBB2/HER2. Within the Golgi apparatus, the propeptide may be cleaved off by FURIN or a furin-like protease. After cleavage, the propeptide interacts with the mature protein N-terminus, preventing the association with other ligands. At the cell surface, partially subjected to proteolytic shedding that releases the ectodomain in the extracellular milieu. The shedding may be catalyzed by ADAM17/TACE. Following shedding, PSEN1/presenilin-1 cleaves the remaining transmembrane fragment and catalyzes the release of a C-terminal fragment in the cytosol and of a soluble N-terminal beta fragment in the extracellular milieu. The C-terminal cytosolic fragment localizes to the nucleus. In terms of processing, phosphorylation at Ser-2207 facilitates the interaction with GGA1. Highly expressed in the central nervous system, including in the brain and spinal cord, in neurons, as well as in glial cells (at protein level). In the brain, mainly expressed in the cerebellum, hippocampus, dentate gyrus, hypothalamus, and in the cerebral cortex (at protein level). Also detected in kidney, heart, lung and spleen. In the kidney, expressed in epithelial cells in the thick ascending limb of Henle's loop, the distal convoluted tubule, the connecting tubule and the cortical collecting duct (at protein level). Expressed in skeletal muscle (at protein level). Expressed in adipose tissue, including in brown adipose tissue and subcutaneous white adipose tissue. Expressed in intimal smooth muscle cells (at protein level).

It is found in the golgi apparatus membrane. It localises to the golgi apparatus. The protein localises to the trans-Golgi network membrane. Its subcellular location is the endosome membrane. The protein resides in the early endosome membrane. It is found in the recycling endosome membrane. It localises to the endoplasmic reticulum membrane. The protein localises to the endosome. Its subcellular location is the multivesicular body membrane. The protein resides in the cell membrane. It is found in the cytoplasmic vesicle. It localises to the secretory vesicle membrane. The protein localises to the secreted. Sorting receptor that directs several proteins to their correct location within the cell. Along with AP-1 complex, involved Golgi apparatus - endosome sorting. Sorting receptor for APP, regulating its intracellular trafficking and processing into amyloidogenic-beta peptides. Retains APP in the trans-Golgi network, hence preventing its transit through late endosomes where amyloid beta peptides Abeta40 and Abeta42 are generated. May also sort newly produced amyloid-beta peptides to lysosomes for catabolism. Does not affect APP trafficking from the endoplasmic reticulum to Golgi compartments. Sorting receptor for the BDNF receptor NTRK2/TRKB that facilitates NTRK2 trafficking between synaptic plasma membranes, postsynaptic densities and cell soma, hence positively regulates BDNF signaling by controlling the intracellular location of its receptor. Sorting receptor for GDNF that promotes GDNF regulated, but not constitutive secretion. Sorting receptor for the GDNF-GFRA1 complex, directing it from the cell surface to endosomes. GDNF is then targeted to lysosomes and degraded, while its receptor GFRA1 recycles back to the cell membrane, resulting in a GDNF clearance pathway. The SORL1-GFRA1 complex further targets RET for endocytosis, but not for degradation, affecting GDNF-induced neurotrophic activities. Sorting receptor for ERBB2/HER2. Regulates ERBB2 subcellular distribution by promoting its recycling after internalization from endosomes back to the plasma membrane, hence stimulating phosphoinositide 3-kinase (PI3K)-dependent ERBB2 signaling. Sorting receptor for lipoprotein lipase LPL. Promotes LPL localization to endosomes and later to the lysosomes, leading to degradation of newly synthesized LPL. Potential sorting receptor for APOA5, inducing APOA5 internalization to early endosomes, then to late endosomes, wherefrom a portion is sent to lysosomes and degradation, another portion is sorted to the trans-Golgi network. Sorting receptor for the insulin receptor INSR. Promotes recycling of internalized INSR via the Golgi apparatus back to the cell surface, thereby preventing lysosomal INSR catabolism, increasing INSR cell surface expression and strengthening insulin signal reception in adipose tissue. Does not affect INSR internalization. Plays a role in renal ion homeostasis, controlling the phospho-regulation of SLC12A1/NKCC2 by STK39/SPAK kinase and PPP3CB/calcineurin A beta phosphatase, possibly through intracellular sorting of STK39 and PPP3CB. Stimulates, via the N-terminal ectodomain, the proliferation and migration of smooth muscle cells, possibly by increasing cell surface expression of the urokinase receptor uPAR/PLAUR. This may promote extracellular matrix proteolysis and hence facilitate cell migration. By acting on the migration of intimal smooth muscle cells, may accelerate intimal thickening following vascular injury. Promotes adhesion of monocytes. Stimulates proliferation and migration of monocytes/macrophages. Through its action on intimal smooth muscle cells and macrophages, may accelerate intimal thickening and macrophage foam cell formation in the process of atherosclerosis. Regulates hypoxia-enhanced adhesion of hematopoietic stem and progenitor cells to the bone marrow stromal cells via a PLAUR-mediated pathway. This function is mediated by the N-terminal ectodomain. Metabolic regulator, which functions to maintain the adequate balance between lipid storage and oxidation in response to changing environmental conditions, such as temperature and diet. The N-terminal ectodomain negatively regulates adipose tissue energy expenditure, acting through the inhibition the BMP/Smad pathway. May regulate signaling by the heterodimeric neurotrophic cytokine CLCF1-CRLF1 bound to the CNTFR receptor by promoting the endocytosis of the tripartite complex CLCF1-CRLF1-CNTFR and lysosomal degradation. May regulate IL6 signaling, decreasing cis signaling, possibly by interfering with IL6-binding to membrane-bound IL6R, while up-regulating trans signaling via soluble IL6R. The chain is Sortilin-related receptor (Sorl1) from Mus musculus (Mouse).